Reading from the N-terminus, the 167-residue chain is Small ribosomal subunit protein uS5 (167 aa).

The region spanning 11–74 is the S5 DRBM domain; that stretch reads LQEKLIAVNR…EKARRAMINV (64 aa).

This sequence belongs to the universal ribosomal protein uS5 family. As to quaternary structure, part of the 30S ribosomal subunit. Contacts proteins S4 and S8.

With S4 and S12 plays an important role in translational accuracy. In terms of biological role, located at the back of the 30S subunit body where it stabilizes the conformation of the head with respect to the body. This is Small ribosomal subunit protein uS5 from Yersinia enterocolitica serotype O:8 / biotype 1B (strain NCTC 13174 / 8081).